Here is a 161-residue protein sequence, read N- to C-terminus: Large ribosomal subunit protein uL30m (161 aa).

A mitochondrion-targeting transit peptide spans Met1–His34.

Belongs to the universal ribosomal protein uL30 family. In terms of assembly, component of the mitochondrial ribosome large subunit (39S) which comprises a 16S rRNA and about 50 distinct proteins.

The protein localises to the mitochondrion. In Macaca fascicularis (Crab-eating macaque), this protein is Large ribosomal subunit protein uL30m (MRPL30).